The chain runs to 563 residues: CDKN2A-interacting protein (563 aa).

An N-acetylalanine modification is found at A2. One can recognise an XRN2-binding (XTBD) domain in the interval 19 to 126; it reads VETLRCEGET…KVKKRGISSS (108 aa). Disordered regions lie at residues 122-289 and 304-351; these read GISS…LLGS and SSSE…PSLL. The residue at position 124 (S124) is a Phosphoserine. Basic and acidic residues predominate over residues 147–160; it reads VERDHGKKSAKTDR. 2 stretches are compositionally biased toward low complexity: residues 168-216 and 234-248; these read SSPS…SSQV and SASF…SMNS. A Glycyl lysine isopeptide (Lys-Gly) (interchain with G-Cter in SUMO1) cross-link involves residue K177. S234 is modified (phosphoserine). Residues 249-262 are compositionally biased toward polar residues; sequence HMTQSTDNRQQSGS. Positions 270 to 280 are enriched in low complexity; sequence GSSGSASQSSS. T340 bears the Phosphothreonine mark. The residue at position 371 (S371) is a Phosphoserine. The DRBM domain occupies 445–520; sequence NHGELLNAAI…SREALKLFLK (76 aa).

Belongs to the CARF family. In terms of assembly, interacts with CDKN2A/p14ARF, p53/TP53 and MDM2. Interacts with CHEK2 and MAPK3. Interacts with XRN2. Post-translationally, may be ubiquitinated.

It is found in the nucleus. Its subcellular location is the nucleoplasm. In terms of biological role, regulates DNA damage response and cell proliferation in a dose-dependent manner through a number of signaling pathways involved in cell proliferation, apoptosis and senescence. The polypeptide is CDKN2A-interacting protein (Cdkn2aip) (Mus musculus (Mouse)).